A 449-amino-acid polypeptide reads, in one-letter code: Phosphoribosylamine--glycine ligase (449 aa).

One can recognise an ATP-grasp domain in the interval 112-325; sequence RELMEKYDIP…IVTLHASIAE (214 aa). 139–202 lines the ATP pocket; it reads IDELGKPVAV…EEKCVGEEYT (64 aa). Positions 283, 295, and 297 each coordinate Mg(2+). Residues Gln283, Glu295, and Asn297 each contribute to the Mn(2+) site.

This sequence belongs to the GARS family. Requires Mg(2+) as cofactor. Mn(2+) is required as a cofactor.

The catalysed reaction is 5-phospho-beta-D-ribosylamine + glycine + ATP = N(1)-(5-phospho-beta-D-ribosyl)glycinamide + ADP + phosphate + H(+). It participates in purine metabolism; IMP biosynthesis via de novo pathway; N(1)-(5-phospho-D-ribosyl)glycinamide from 5-phospho-alpha-D-ribose 1-diphosphate: step 2/2. In Methanopyrus kandleri (strain AV19 / DSM 6324 / JCM 9639 / NBRC 100938), this protein is Phosphoribosylamine--glycine ligase.